Consider the following 466-residue polypeptide: Cytochrome P450 85A (466 aa).

Residues 2-22 (ALFMAILGVLVLLLCLCSALL) form a helical membrane-spanning segment. Residue cysteine 414 coordinates heme.

The protein belongs to the cytochrome P450 family. Heme is required as a cofactor.

It localises to the membrane. Catalyzes the C6-oxidation step in brassinosteroids biosynthesis. The sequence is that of Cytochrome P450 85A from Phaseolus vulgaris (Kidney bean).